The chain runs to 465 residues: MATTRSEKDSMGSIDVPANQLWGAQTQRSLAHFRISQEKMPTELIHALALTKRAAAQVNMDLGLLPAERAKAIMRAADEVLDGAHPTEFPLAIWQTGSGTQTNMNMNEVLANRASELLGGARGNNRLVHPNDDVNKSQSSNDVFPTAMHVAAVMGVSEHLLPELKVLQKTLADKAEAYRDIVKIGRTHLQDATPLTLGQEISGWAAMLSHSVRHIEATLPHLCELALGGTAVGTGLNTHPEYAVRVANEIATLTRQPFITAPNKFESLGTCDALVHGHGALKGLAASLMKIANDVRWLSSGPRCGIGEISIPENEPGSSIMPGKVNPTQCEAMTMLCAQVMGNDVAINIGGASGNFELNVFRPLVIHNFLQSVRLLADGMRGFNEHCALGIEPNRDRITQLLNESLMLVTALNTHIGYDKAAEIAKKAHKEGLTLKAAAMALGYLTDAEFDEWVRPEDMVGSMKK.

Substrate-binding positions include Ser98–Thr100, Arg126, His129–Asp132, Ser139–Asn141, and Thr187. His188 acts as the Proton donor/acceptor in catalysis. Residue Ser318 is part of the active site. Residues Ser319 and Lys324–Asn326 each bind substrate.

Belongs to the class-II fumarase/aspartase family. Fumarase subfamily. In terms of assembly, homotetramer.

The protein localises to the cytoplasm. The enzyme catalyses (S)-malate = fumarate + H2O. The protein operates within carbohydrate metabolism; tricarboxylic acid cycle; (S)-malate from fumarate: step 1/1. Functionally, involved in the TCA cycle. Catalyzes the stereospecific interconversion of fumarate to L-malate. The chain is Fumarate hydratase class II from Yersinia pestis.